Consider the following 202-residue polypeptide: Oligoribonuclease (202 aa).

Residues 2–166 (LVWIDCEMTG…ADIQESIEEL (165 aa)) enclose the Exonuclease domain. Y123 is an active-site residue.

This sequence belongs to the oligoribonuclease family.

It localises to the cytoplasm. Functionally, 3'-to-5' exoribonuclease specific for small oligoribonucleotides. In Cutibacterium acnes (strain DSM 16379 / KPA171202) (Propionibacterium acnes), this protein is Oligoribonuclease.